The primary structure comprises 84 residues: uncharacterized protein (84 aa).

This is an uncharacterized protein from Escherichia coli O6:H1 (strain CFT073 / ATCC 700928 / UPEC).